Here is a 222-residue protein sequence, read N- to C-terminus: Glutathione S-transferase A3 (222 aa).

Alanine 2 carries the N-acetylalanine modification. Residues 3–83 enclose the GST N-terminal domain; the sequence is GKPKLHYFNG…YIASKYNLYG (81 aa). Position 4 is an N6-succinyllysine (lysine 4). Residues tyrosine 9, arginine 45, 54-55, and 67-68 each bind glutathione; these read QV and QT. The region spanning 85-207 is the GST C-terminal domain; the sequence is DIKERALIDM…LQPGSPRKPP (123 aa).

The protein belongs to the GST superfamily. Alpha family. In terms of assembly, homodimer.

It is found in the cytoplasm. The enzyme catalyses RX + glutathione = an S-substituted glutathione + a halide anion + H(+). It carries out the reaction androst-5-ene-3,17-dione = androst-4-ene-3,17-dione. It catalyses the reaction pregn-5-ene-3,20-dione = progesterone. Its function is as follows. Conjugation of reduced glutathione to a wide number of exogenous and endogenous hydrophobic electrophiles. Catalyzes isomerization reactions that contribute to the biosynthesis of steroid hormones. Efficiently catalyze obligatory double-bond isomerizations of delta(5)-androstene-3,17-dione and delta(5)-pregnene-3,20-dione, precursors to testosterone and progesterone, respectively. Has substantial activity toward aflatoxin B1-8,9-epoxide. This is Glutathione S-transferase A3 from Homo sapiens (Human).